The primary structure comprises 120 residues: Small ribosomal subunit protein uS13 (120 aa).

The interval 96–120 (PCRGQRTRTNARTRKGPRKAIAGKK) is disordered.

The protein belongs to the universal ribosomal protein uS13 family. Part of the 30S ribosomal subunit. Forms a loose heterodimer with protein S19. Forms two bridges to the 50S subunit in the 70S ribosome.

Functionally, located at the top of the head of the 30S subunit, it contacts several helices of the 16S rRNA. In the 70S ribosome it contacts the 23S rRNA (bridge B1a) and protein L5 of the 50S subunit (bridge B1b), connecting the 2 subunits; these bridges are implicated in subunit movement. Contacts the tRNAs in the A and P-sites. This Neisseria gonorrhoeae (strain ATCC 700825 / FA 1090) protein is Small ribosomal subunit protein uS13.